The following is a 350-amino-acid chain: MSHQTGIQASEDVKDIFARARNGKYRLLKISIENEKLVIGSCRKPSDSWDQDYDSFVLPLLEDKQPCYVLFRLDSQNAQGYEWIFIAWSPDHSHVRQKMLYAATRATLKKEFGGGHIKDEMFGTVKEDVSLHGYKKYLLSQSSPAPLTAAEEELRQIKINEVQTDVSVDAKHQTLQGVAFPISQEAFQALEKLNNRQLNYVQLEIDIKNEIIILANTINTELKDLPKRIPKDAARYHFFLYKHSHEGDYLESIVFIYSMPGYTCSIRERMLYSSCKSPLLEIVERQLQMDIIRKIEIDNGDELTADFLYEEVHPKQHAHKQSFAKPKGPSGKRGIRRIIRGPAETEATTE.

Ser2 is subject to N-acetylserine. The ADF-H 1 domain maps to 2-139 (SHQTGIQASE…SLHGYKKYLL (138 aa)). Phosphoserine occurs at positions 143 and 277. An ADF-H 2 domain is found at 177 to 313 (GVAFPISQEA…TADFLYEEVH (137 aa)). Tyr309 is subject to Phosphotyrosine. Positions 316–350 (QHAHKQSFAKPKGPSGKRGIRRIIRGPAETEATTE) are disordered. Thr349 bears the Phosphothreonine mark.

It belongs to the actin-binding proteins ADF family. Twinfilin subfamily. Interacts with G-actin; ADP-actin form and capping protein (CP). May also be able to interact with TWF2 and phosphoinositides, PI(4,5)P2. When bound to PI(4,5)P2, it is down-regulated. Interacts with ACTG1. In terms of processing, phosphorylated on serine and threonine residues.

The protein resides in the cytoplasm. The protein localises to the cytoskeleton. Functionally, actin-binding protein involved in motile and morphological processes. Inhibits actin polymerization, likely by sequestering G-actin. By capping the barbed ends of filaments, it also regulates motility. Seems to play an important role in clathrin-mediated endocytosis and distribution of endocytic organelles. The protein is Twinfilin-1 (TWF1) of Bos taurus (Bovine).